A 26-amino-acid polypeptide reads, in one-letter code: Mucus envelope protein (26 aa).

In terms of processing, glycosylated. As to expression, produced by the opercular gland in the gill cavity and secreted as part of the mucus cocoon.

Its subcellular location is the secreted. Functionally, exhibits antibacterial activity. May play a role in protection against parasite settlement. This is Mucus envelope protein from Scarus vetula (Queen parrotfish).